The sequence spans 303 residues: Propanal dehydrogenase (CoA-propanoylating) (303 aa).

12 to 15 contacts NAD(+); sequence SGNI. Cys-127 functions as the Acyl-thioester intermediate in the catalytic mechanism. NAD(+) is bound by residues 158 to 166 and Asn-277; that span reads SAGPGTRAN.

Belongs to the acetaldehyde dehydrogenase family. In terms of assembly, monomer. Forms a heterotetramer composed of two aldolase (HsaF) and two dehydrogenase (HsaG) subunits.

The catalysed reaction is propanal + NAD(+) + CoA = propanoyl-CoA + NADH + H(+). It catalyses the reaction acetaldehyde + NAD(+) + CoA = acetyl-CoA + NADH + H(+). Its function is as follows. Involved in cholesterol degradation. Catalyzes the conversion of propanal to propanoyl-CoA, using NAD(+) and coenzyme A. This chain is Propanal dehydrogenase (CoA-propanoylating), found in Mycobacterium bovis (strain ATCC BAA-935 / AF2122/97).